The chain runs to 67 residues: Beta-defensin 103A (67 aa).

A signal peptide spans 1-22 (MRIHYLLFALLFLFLVPVPGHG). 3 disulfides stabilise this stretch: cysteine 33–cysteine 62, cysteine 40–cysteine 55, and cysteine 45–cysteine 63.

The protein belongs to the beta-defensin family.

The protein localises to the secreted. Its function is as follows. Exhibits antimicrobial activity against Gram-positive and Gram-negative bacteria. The chain is Beta-defensin 103A (DEFB103A) from Pan troglodytes (Chimpanzee).